The primary structure comprises 324 residues: Putative transcription factor sel-7 (324 aa).

Positions 67–85 (SPPQTVISEAPPQSFTPSA) are enriched in polar residues. Residues 67–151 (SPPQTVISEA…DEKVLADGPF (85 aa)) form a disordered region. The span at 86–98 (TNSTSDKTSSSLK) shows a compositional bias: low complexity. The span at 106–123 (SDGDLDMEGEEDTEELFD) shows a compositional bias: acidic residues. Polar residues predominate over residues 124–133 (NESQPSQRNQ). Positions 134-146 (SPKETEVEDEKVL) are enriched in basic and acidic residues.

In terms of assembly, multimer. May interact with mediator complex subunit mdt-29. Widely expressed, including in pharyngeal muscle cells and body wall muscle cells.

It is found in the nucleus. Its function is as follows. Putative transcription factor. Positive regulator of the lin-12/Notch signaling pathway. Binds to specific DNA sequences in regulatory elements. Involved in cell fate decisions that require cell-cell interactions, such as the anchor cell (AC) / ventral uterine (VU) precursor cell fate decision. Heterochronic protein which controls the choice of stage specific cell fates, including the larval L3 stage-specific fate of seam cells. Involved in regulating the temporal expression pattern of hunchback-like protein hbl-1, thereby playing a role in the progression between larval stages L2 and L3. The chain is Putative transcription factor sel-7 from Caenorhabditis elegans.